The primary structure comprises 152 residues: Ribosome maturation factor RimP (152 aa).

Belongs to the RimP family.

Its subcellular location is the cytoplasm. Required for maturation of 30S ribosomal subunits. In Porphyromonas gingivalis (strain ATCC 33277 / DSM 20709 / CIP 103683 / JCM 12257 / NCTC 11834 / 2561), this protein is Ribosome maturation factor RimP.